Reading from the N-terminus, the 428-residue chain is GTPase Obg (428 aa).

Residues 1-158 (MFVDQTKIDV…RTLRLELKVL (158 aa)) form the Obg domain. The region spanning 159–328 (ADVGLVGFPS…LMGKTADLVE (170 aa)) is the OBG-type G domain. GTP-binding positions include 165–172 (GFPSVGKS), 190–194 (FTTLT), 212–215 (DLPG), 282–285 (TQMD), and 309–311 (SSV). Positions 172 and 192 each coordinate Mg(2+). The region spanning 350–428 (YKKPEDDGFK…IADFTFEFVD (79 aa)) is the OCT domain.

The protein belongs to the TRAFAC class OBG-HflX-like GTPase superfamily. OBG GTPase family. As to quaternary structure, monomer. Requires Mg(2+) as cofactor.

The protein localises to the cytoplasm. In terms of biological role, an essential GTPase which binds GTP, GDP and possibly (p)ppGpp with moderate affinity, with high nucleotide exchange rates and a fairly low GTP hydrolysis rate. Plays a role in control of the cell cycle, stress response, ribosome biogenesis and in those bacteria that undergo differentiation, in morphogenesis control. This chain is GTPase Obg, found in Lactobacillus gasseri (strain ATCC 33323 / DSM 20243 / BCRC 14619 / CIP 102991 / JCM 1131 / KCTC 3163 / NCIMB 11718 / NCTC 13722 / AM63).